Here is a 204-residue protein sequence, read N- to C-terminus: LexA repressor (204 aa).

The H-T-H motif DNA-binding region spans 29–49 (VREIGDAVGLMSSSTVHGHLQ). Active-site for autocatalytic cleavage activity residues include serine 127 and lysine 164.

It belongs to the peptidase S24 family. As to quaternary structure, homodimer.

It carries out the reaction Hydrolysis of Ala-|-Gly bond in repressor LexA.. Its function is as follows. Represses a number of genes involved in the response to DNA damage (SOS response), including recA and lexA. In the presence of single-stranded DNA, RecA interacts with LexA causing an autocatalytic cleavage which disrupts the DNA-binding part of LexA, leading to derepression of the SOS regulon and eventually DNA repair. The polypeptide is LexA repressor (Desulfitobacterium hafniense (strain DSM 10664 / DCB-2)).